Here is a 624-residue protein sequence, read N- to C-terminus: Ubiquitin-associated and SH3 domain-containing protein A (624 aa).

The 42-residue stretch at 19-60 folds into the UBA domain; the sequence is RSTPSLLDPLLAMGFPTHTALKALAATGRKTAEAAADWLHGH. Positions 238 to 303 constitute an SH3 domain; sequence VHYQTLKALF…PENYTERANE (66 aa). Residues 358 to 624 are phosphatase-like; that stretch reads RRGILVVRHG…FNWRNWISSN (267 aa).

In terms of assembly, homodimer or homooligomer. Interacts with CBL. Part of a complex containing CBL and activated EGFR. Interacts with ubiquitin and with mono-ubiquitinated proteins. Interacts with dynamin.

It localises to the cytoplasm. It is found in the nucleus. Its function is as follows. Interferes with CBL-mediated down-regulation and degradation of receptor-type tyrosine kinases. Promotes accumulation of activated target receptors, such as T-cell receptors, EGFR and PDGFRB, on the cell surface. May inhibit dynamin-dependent endocytic pathways by functionally sequestering dynamin via its SH3 domain. Exhibits negligible protein tyrosine phosphatase activity at neutral pH. May act as a dominant-negative regulator of UBASH3B-dependent dephosphorylation. This is Ubiquitin-associated and SH3 domain-containing protein A (Ubash3a) from Mus musculus (Mouse).